Reading from the N-terminus, the 556-residue chain is Formate--tetrahydrofolate ligase (556 aa).

Residue 65–72 participates in ATP binding; that stretch reads TPAGEGKS.

The protein belongs to the formate--tetrahydrofolate ligase family.

It catalyses the reaction (6S)-5,6,7,8-tetrahydrofolate + formate + ATP = (6R)-10-formyltetrahydrofolate + ADP + phosphate. It functions in the pathway one-carbon metabolism; tetrahydrofolate interconversion. This Clostridium acetobutylicum (strain ATCC 824 / DSM 792 / JCM 1419 / IAM 19013 / LMG 5710 / NBRC 13948 / NRRL B-527 / VKM B-1787 / 2291 / W) protein is Formate--tetrahydrofolate ligase.